We begin with the raw amino-acid sequence, 38 residues long: Lebetin-2-alpha (38 aa).

The tract at residues 1 to 38 is disordered; the sequence is GDNKPPKKGPPNGCFGHKIDRIGSHSGLGCNKVDDNKG. Cys-14 and Cys-30 are joined by a disulfide.

Belongs to the natriuretic peptide family. Expressed by the venom gland.

The protein localises to the secreted. Its function is as follows. Inhibits platelet aggregation induced by thrombin, collagen and PAF-acether. Human platelet aggregation induced by thrombin is inhibited by synthetic lebetin-1-alpha with (IC(50)=140 nM). In vivo, inhibits collagen-induced thrombocytopenia in rats. Is not toxic upon intravenous injection into mice and rats. Inhibits platelet aggregation induced by thrombin, collagen and PAF-acether. Human platelet aggregation induced by thrombin is inhibited by synthetic lebetin-1-beta with (IC(50)=32 nM). In vivo, inhibits collagen-induced thrombocytopenia in rats. Is not toxic upon intravenous injection into mice and rats. Functionally, inhibits platelet aggregation induced by thrombin, collagen and PAF-acether. Human platelet aggregation induced by thrombin is inhibited by synthetic lebetin-1-gamma with (IC(50)=5 nM). In vivo, inhibits collagen-induced thrombocytopenia in rats. Is not toxic upon intravenous injection into mice and rats. In terms of biological role, inhibits platelet aggregation induced by thrombin, collagen and PAF-acether. Human platelet aggregation induced by thrombin is inhibited by synthetic lebetin-1-alpha with (IC(50)=2.5 nM). In vivo, inhibits collagen-induced thrombocytopenia in rats. Is not toxic upon intravenous injection into mice and rats. Its function is as follows. Inhibits platelet aggregation induced by thrombin, collagen and PAF-acether. Human platelet aggregation induced by thrombin is inhibited by synthetic lebetin-1-alpha with (IC(50)=2.8 nM). In vivo, inhibits collagen-induced thrombocytopenia in rats. Is not toxic upon intravenous injection into mice and rats. This Macrovipera lebetinus (Levantine viper) protein is Lebetin-2-alpha.